Consider the following 43-residue polypeptide: Protein PsbN (43 aa).

The helical transmembrane segment at 4–24 threads the bilayer; it reads ATVLSITFAVILIAITGLAVY.

This sequence belongs to the PsbN family.

It is found in the cellular thylakoid membrane. Functionally, may play a role in photosystem I and II biogenesis. This chain is Protein PsbN, found in Synechocystis sp. (strain ATCC 27184 / PCC 6803 / Kazusa).